Reading from the N-terminus, the 335-residue chain is Homeobox protein DBX1 (335 aa).

2 disordered regions span residues 58-102 and 240-335; these read IPAA…LSPA and KERE…ITVS. Positions 83 to 95 are enriched in low complexity; that stretch reads GSPGSGSRRGSSP. Residues 181–240 constitute a DNA-binding region (homeobox); it reads GMLRRAVFSDVQRKALEKTFQKQKYISKPDRKKLASKLGLKDSQVKIWFQNRRMKWRNSK. Over residues 299 to 317 the composition is skewed to low complexity; it reads GPLPASPAHSSSPGKPSDF. Over residues 318-335 the composition is skewed to acidic residues; sequence SDSDEDEEGEEDEEITVS.

It belongs to the H2.0 homeobox family.

The protein localises to the nucleus. Functionally, could have a role in patterning the central nervous system during embryogenesis. Has a key role in regulating the distinct phenotypic features that distinguish two major classes of ventral interneurons, V0 and V1 neurons. Regulates the transcription factor profile, neurotransmitter phenotype, intraspinal migratory path and axonal trajectory of V0 neurons, features that differentiate them from an adjacent set of V1 neurons. The polypeptide is Homeobox protein DBX1 (Dbx1) (Mus musculus (Mouse)).